The sequence spans 237 residues: Aspartate/glutamate leucyltransferase (237 aa).

It belongs to the R-transferase family. Bpt subfamily.

It localises to the cytoplasm. The catalysed reaction is N-terminal L-glutamyl-[protein] + L-leucyl-tRNA(Leu) = N-terminal L-leucyl-L-glutamyl-[protein] + tRNA(Leu) + H(+). It catalyses the reaction N-terminal L-aspartyl-[protein] + L-leucyl-tRNA(Leu) = N-terminal L-leucyl-L-aspartyl-[protein] + tRNA(Leu) + H(+). Functions in the N-end rule pathway of protein degradation where it conjugates Leu from its aminoacyl-tRNA to the N-termini of proteins containing an N-terminal aspartate or glutamate. This is Aspartate/glutamate leucyltransferase from Shewanella amazonensis (strain ATCC BAA-1098 / SB2B).